The primary structure comprises 508 residues: Probable cytochrome P450 6d5 (508 aa).

Cysteine 453 serves as a coordination point for heme.

Belongs to the cytochrome P450 family. The cofactor is heme.

It localises to the endoplasmic reticulum membrane. The protein resides in the microsome membrane. In terms of biological role, may be involved in the metabolism of insect hormones and in the breakdown of synthetic insecticides. In Drosophila melanogaster (Fruit fly), this protein is Probable cytochrome P450 6d5 (Cyp6d5).